Here is a 481-residue protein sequence, read N- to C-terminus: RAC-beta serine/threonine-protein kinase (481 aa).

Residue Met1 is modified to N-acetylmethionine. A PH domain is found at 5-108; it reads SVIKEGWLHK…WIRAIQMVAN (104 aa). Residue Ser34 is modified to Phosphoserine. Cysteines 60 and 77 form a disulfide. At Ser126 the chain carries Phosphoserine. O-linked (GlcNAc) serine glycans are attached at residues Ser128 and Ser131. The Protein kinase domain occupies 152 to 409; sequence FDYLKLLGKG…AKEVMEHRFF (258 aa). ATP-binding positions include 158-166 and Lys181; that span reads LGKGTFGKV. Asp275 serves as the catalytic Proton acceptor. Positions 280 and 293 each coordinate Mn(2+). An O-linked (GlcNAc) threonine glycan is attached at Thr306. Thr309 is subject to Phosphothreonine; by PDPK1. Thr313 carries O-linked (GlcNAc) threonine glycosylation. The region spanning 410–481 is the AGC-kinase C-terminal domain; it reads LSINWQDVVQ…QFSYSASIRE (72 aa). Ser447 bears the Phosphoserine mark. A Phosphothreonine modification is found at Thr451. 3 positions are modified to phosphoserine: Ser461, Ser474, and Ser478. The O-linked (GlcNAc) serine; alternate glycan is linked to Ser474.

The protein belongs to the protein kinase superfamily. AGC Ser/Thr protein kinase family. RAC subfamily. As to quaternary structure, interacts with BTBD10. Interacts with KCTD20. Interacts (via PH domain) with MTCP1, TCL1A and TCL1B; this interaction may facilitate AKT2 oligomerization and phosphorylation, hence increasing kinase activity. Interacts with PHB2; this interaction may be important for myogenic differentiation. Interacts (when phosphorylated) with CLIP3; this interaction promotes cell membrane localization. Interacts with WDFY2 (via WD repeats 1-3). Phosphorylation on Thr-309 and Ser-474 is required for full activity. Phosphorylation of the activation loop at Thr-309 by PDPK1/PDK1 is a prerequisite for full activation. Phosphorylated and activated by PDPK1/PDK1 in the presence of phosphatidylinositol 3,4,5-trisphosphate. Phosphorylation by mTORC2 in response to growth factors plays a key role in AKT1 activation: mTORC2 phosphorylates different sites depending on the context, such as Ser-474 or Ser-478, thereby facilitating subsequent phosphorylation of the activation loop by PDPK1/PDK1. Post-translationally, ubiquitinated; undergoes both 'Lys-48'- and 'Lys-63'-linked polyubiquitination. TRAF6-induced 'Lys-63'-linked AKT2 ubiquitination. When fully phosphorylated and translocated into the nucleus, undergoes 'Lys-48'-polyubiquitination catalyzed by TTC3, leading to its degradation by the proteasome. In terms of processing, O-GlcNAcylation at Thr-306 and Thr-313 inhibits activating phosphorylation at Thr-309 via disrupting the interaction between AKT and PDPK1/PDK1. As to expression, expressed in adipocytes and hepatocytes (at protein level). Expressed at low levels in skeletal muscle (at protein level).

It is found in the cytoplasm. The protein resides in the nucleus. Its subcellular location is the cell membrane. The protein localises to the early endosome. It catalyses the reaction L-seryl-[protein] + ATP = O-phospho-L-seryl-[protein] + ADP + H(+). The catalysed reaction is L-threonyl-[protein] + ATP = O-phospho-L-threonyl-[protein] + ADP + H(+). Its activity is regulated as follows. Phosphorylation at Thr-309 (in the kinase domain) and Ser-474 (in the C-terminal regulatory region) is required for full activation. In adipocytes and hepatocytes, the activation is induced by insulin. AKT2 phosphorylation of PKP1 is induced by insulin. In terms of biological role, serine/threonine kinase closely related to AKT1 and AKT3. All 3 enzymes, AKT1, AKT2 and AKT3, are collectively known as AKT kinase. AKT regulates many processes including metabolism, proliferation, cell survival, growth and angiogenesis, through the phosphorylation of a range of downstream substrates. Over 100 substrates have been reported so far, although for most of them, the precise AKT kinase catalyzing the reaction was not specified. AKT regulates glucose uptake by mediating insulin-induced translocation of the SLC2A4/GLUT4 glucose transporter to the cell surface. Phosphorylation of PTPN1 at 'Ser-50' negatively modulates its phosphatase activity preventing dephosphorylation of the insulin receptor and the attenuation of insulin signaling. Phosphorylation of TBC1D4 triggers the binding of this effector to inhibitory 14-3-3 proteins, which is required for insulin-stimulated glucose transport. AKT also regulates the storage of glucose in the form of glycogen by phosphorylating GSK3A at 'Ser-21' and GSK3B at 'Ser-9', resulting in inhibition of its kinase activity. Phosphorylation of GSK3 isoforms by AKT is also thought to be one mechanism by which cell proliferation is driven. AKT also regulates cell survival via the phosphorylation of MAP3K5 (apoptosis signal-related kinase). Phosphorylation of 'Ser-83' decreases MAP3K5 kinase activity stimulated by oxidative stress and thereby prevents apoptosis. AKT mediates insulin-stimulated protein synthesis by phosphorylating TSC2 at 'Ser-939' and 'Thr-1462', thereby activating mTORC1 signaling and leading to both phosphorylation of 4E-BP1 and in activation of RPS6KB1. AKT is involved in the phosphorylation of members of the FOXO factors (Forkhead family of transcription factors), leading to binding of 14-3-3 proteins and cytoplasmic localization. In particular, FOXO1 is phosphorylated at 'Thr-24', 'Ser-256' and 'Ser-319'. FOXO3 and FOXO4 are phosphorylated on equivalent sites. AKT has an important role in the regulation of NF-kappa-B-dependent gene transcription and positively regulates the activity of CREB1 (cyclic AMP (cAMP)-response element binding protein). The phosphorylation of CREB1 induces the binding of accessory proteins that are necessary for the transcription of pro-survival genes such as BCL2 and MCL1. AKT phosphorylates 'Ser-454' on ATP citrate lyase (ACLY), thereby potentially regulating ACLY activity and fatty acid synthesis. Activates the 3B isoform of cyclic nucleotide phosphodiesterase (PDE3B) via phosphorylation of 'Ser-273', resulting in reduced cyclic AMP levels and inhibition of lipolysis. Phosphorylates PIKFYVE on 'Ser-318', which results in increased PI(3)P-5 activity. The Rho GTPase-activating protein DLC1 is another substrate and its phosphorylation is implicated in the regulation cell proliferation and cell growth. AKT plays a role as key modulator of the AKT-mTOR signaling pathway controlling the tempo of the process of newborn neurons integration during adult neurogenesis, including correct neuron positioning, dendritic development and synapse formation. Signals downstream of phosphatidylinositol 3-kinase (PI(3)K) to mediate the effects of various growth factors such as platelet-derived growth factor (PDGF), epidermal growth factor (EGF), insulin and insulin-like growth factor 1 (IGF1). AKT mediates the antiapoptotic effects of IGF1. Essential for the SPATA13-mediated regulation of cell migration and adhesion assembly and disassembly. May be involved in the regulation of the placental development. In response to lysophosphatidic acid stimulation, inhibits the ciliogenesis cascade. In this context, phosphorylates WDR44, hence stabilizing its interaction with Rab11 and preventing the formation of the ciliogenic Rab11-FIP3-RAB3IP complex. Also phosphorylates RAB3IP/Rabin8, thus may affect RAB3IP guanine nucleotide exchange factor (GEF) activity toward Rab8, which is important for cilia growth. Phosphorylates PKP1, facilitating its interaction with YWHAG and translocation to the nucleus, ultimately resulting in a reduction in keratinocyte intercellular adhesion. Phosphorylation of PKP1 increases PKP1 protein stability, translocation to the cytoplasm away from desmosome plaques and PKP1-driven cap-dependent translation. Several AKT2-specific substrates have been identified, including ANKRD2, C2CD5, CLK2 and PITX2. May play a role in myoblast differentiation. In this context, may act through PITX2 phosphorylation. Unphosphorylated PITX2 associates with an ELAVL1/HuR-containing complex, which stabilizes cyclin mRNA and ensuring cell proliferation. Phosphorylation by AKT2 impairs this association, leading to CCND1 mRNA destabilization and progression towards differentiation. Also involved in the negative regulation of myogenesis in response to stress conditions. In this context, acts by phosphorylating ANKRD2. May also be a key regulator of glucose uptake. Regulates insulin-stimulated glucose transport by the increase of glucose transporter GLUT4 translocation from intracellular stores to the plasma membrane. In this context, acts by phosphorylating C2CD5/CDP138 on 'Ser-197' in insulin-stimulated adipocytes. Through the phosphorylation of CLK2 on 'Thr-343', involved in insulin-regulated suppression of hepatic gluconeogenesis. The protein is RAC-beta serine/threonine-protein kinase of Rattus norvegicus (Rat).